A 2297-amino-acid polypeptide reads, in one-letter code: MAEVAKQKKATEAVCGDEDFPPPPPPLPRPQVLESLQKDLSQNFLPVPPPKETFSEIYQQRQKSELKRLFKHIHPELKMTVDDVVDDELIDAINPQAADAAYQGEVQSMRWIFENWTLDNIGDPHETKKLLCEENPQGGDVKGKSSLFEHSTFDSQHAAGAERAGVVRGDVRTATWLFETQPLDSISKSKIEDEEIVEVVLKEPVQKGDVTGARRLFETKPLDSLGRCCSVEDQHFLTLKSELQENKGDVKKTVKLFQADPCCALRDSNGKIHEIKSICREEIMSSDFKTARWLFETQPLDHINEGAHVQIIRGISLEEAQRGGVDKKKWMFETQPLDAIHEGVVEEQKFQGTAVEGFSGAADVHNKLQLFENQPLSSLKGDSEGDVLEKEAIVGGNVGSTLWLFETQPMDTLKDSYEVGRLQKVMVSSDEKGEVQDKRMQFEKSTAGKTAGDSGNKVQNDEKGDVKTFKSLFETLPLNVSEKAQSQIHDITSGDVKGHCSLFETTPLYAIKDCAGKFHEVTTVSREECIKGNVQNYKWMFETRPLDQFEEGSGKVELIKGITRQEDMTDDTRTAKWMFETQPLDCMSLNSRTDVDSTQKEFKKSNVKTCKWLFETKPMDMLYEKSEGKQDVEPVPKADVKSHTWLFETQPLDNIKDKENLGLKLCSTVQEDVKSDVNVKTVKHLFETEPLDRITDQADSGQNVRCVSQVDMQSGDVSRVKEIFESKSLGTESSKWSEEQKNEIQSGSVHKFTWLFENQPIGDINEKEERIVSCDVEAGDVGGKKFIFETLSLDKIKDKDELLEHPSMIIEKPLSSSVNVKSNTMLFESQPLYAIRDKDGQFHEVTTVMKEEVMRGDVRGARWMFETKPLDTIQADKEIYVIRAVTQEDVHKGDVKSARWKFETQPLDSFTPHEGPSVRVVEDIGNEKCVQQSRQLFETEQASQKKFVRMVSVTDVQQGDVRTSTWLFENQPIDTLKGEPDEQNNLTAVHREDNTKGDVKRCTWLFESQSLDKIKDNKPTEELVSSREEIPKADVKSTTWLFETTPLDKITVESVTDILYRLCHNSFIHSSGIIIQANDYKYVNMAKYQIMKDEGPKVLKEEVVEGNIRNLMLQLLFKPNIKPMVVLLKEDEQGKMHSTVLEIPFQQPGSATNPEAECKTQEAVKIIENLLVQQKEIKTGLVMQESEGGQPEMTVYSLHCESSLTESQTITRGDVKSTIGNLLATVHSQQTKQSCRMEEIERGNVNLYKSCIEKGDLKSLQRELSEEDLVTSCRDQIEIVQGDVKEAMRHLSQQREQVERTILDVVPGDVKNVKKVFSDVCTDLSIGNCVPREEIVRGDILSAKQQLGEAVKQQVMVQKEEIVSGDIKATLESLERAKQQSMQVEREVIKPGTIYDLNVEAEEMCSEENESKLVKEEIIPGDIKAAKRSLERAKNQSMKVEREPITPGKLYNLNETSQCQSSTTVEQSTTSTYSNHRITTTFRKVSDIEKDQESIKRLCCLNEVGGGGKNIYINTEDALRMVDISESVPDVVKGDVKATIQSLRSASTEQRSVDREEIVRGNMQETLQCLKKSSINISRGDYKAAMLYKQSGQPYTQSKITNDSGTKDCKQSFDHIPSSHTQLSSSVSVTRSEHPTSLALNSESVSSNADNSKNSSAFTGKDEHPPPILPKTGHQVKDQKPVIPPKPLHITTSSPPLFTETSNMCPNSTVSINDTQQTPAIPLKVTPSNKMFTHETEIAKTSNKIKDKESKIHEQVQRTNLTDPTDFQRMQYTEQWVQNSHMQITDTPSVNKTDSFKNGSFPGDSIGMEKNVVQRINAAEEIRMCYSKDNDELNKGFKAVLQNFGEKKTTTDTGSPFPKKIKVVQKENIQEQAKTSNKDELHFTSRDTSSTPNKHEVPSIHNNSENKVVLREKKAKRETEDERRQRLSIHRDEIMRGNVKAAMEIFENLMRREELKVILSKVQEIEGETFEVDVRSLKTLFENVPAWITNPKENTKRRHRPRVAKETEGLRDDLESISSVEAAFEDLEKASMDIVNLKEQTLAKLLDIEEAIKKALYSVSNLKSEADIAGLSGLFSESLSPDNVSPSTKNIRKISIVSSKTKPAQSNQMQSADNRALYKEVPHVPQVQVSKQSSNVPSSPSFISIHSAARKPAESPTDKPKTNADQSNAGSSSSQNSSASHICSPPSPRRKVSVLEVQRVPEVPSGIFGTKTVSEKYEETDCFGNTYYSSKRSTFVTRQSETELSSSYDVVTSPRRSEGMTSPVLQRSGQSFSSNSLSKGKDRKVFVTFGHPNTEKH.

The span at 1–11 (MAEVAKQKKAT) shows a compositional bias: basic and acidic residues. The disordered stretch occupies residues 1 to 28 (MAEVAKQKKATEAVCGDEDFPPPPPPLP). Xin repeat units follow at residues 104-119 (GEVQSMRWIFENWTLD), 139-154 (GDVKGKSSLFEHSTFD), 169-184 (GDVRTATWLFETQPLD), 208-223 (GDVTGARRLFETKPLD), 248-263 (GDVKKTVKLFQADPCC), 286-301 (SDFKTARWLFETQPLD), 323-338 (GGVDKKKWMFETQPLD), 362-377 (ADVHNKLQLFENQPLS), and 396-411 (GNVGSTLWLFETQPMD). The segment covering 433–442 (GEVQDKRMQF) has biased composition (basic and acidic residues). Positions 433-461 (GEVQDKRMQFEKSTAGKTAGDSGNKVQND) are disordered. Xin repeat units follow at residues 464-479 (GDVKTFKSLFETLPLN), 494-509 (GDVKGHCSLFETTPLY), 532-547 (GNVQNYKWMFETRPLD), 570-585 (DDTRTAKWMFETQPLD), 605-620 (SNVKTCKWLFETKPMD), 638-653 (ADVKSHTWLFETQPLD), 677-692 (VNVKTVKHLFETEPLD), 715-730 (GDVSRVKEIFESKSLG), 747-762 (GSVHKFTWLFENQPIG), 779-794 (GDVGGKKFIFETLSLD), 818-833 (VNVKSNTMLFESQPLY), 856-871 (GDVRGARWMFETKPLD), 893-908 (GDVKSARWKFETQPLD), and 928-943 (KCVQQSRQLFETEQAS). A Phosphoserine modification is found at S952. Xin repeat units lie at residues 959–974 (GDVRTSTWLFENQPID), 997–1012 (GDVKRCTWLFESQSLD), and 1033–1048 (ADVKSTTWLFETTPLD). Disordered stretches follow at residues 1617 to 1680 (PSSH…KDQK), 1866 to 1900 (KENIQEQAKTSNKDELHFTSRDTSSTPNKHEVPSI), 2147 to 2191 (SAAR…PRRK), and 2243 to 2297 (ELSS…TEKH). Composition is skewed to low complexity over residues 1618–1630 (SSHTQLSSSVSVT) and 1644–1656 (SVSSNADNSKNSS). 2 stretches are compositionally biased toward basic and acidic residues: residues 1876 to 1885 (SNKDELHFTS) and 2151 to 2162 (KPAESPTDKPKT). Positions 2166–2180 (QSNAGSSSSQNSSAS) are enriched in low complexity. Residues 2259–2278 (GMTSPVLQRSGQSFSSNSLS) are compositionally biased toward polar residues.

This sequence belongs to the Xin family. In terms of tissue distribution, expressed at intercalated disks in the heart (at protein level).

Its subcellular location is the cell junction. The protein resides in the adherens junction. It localises to the desmosome. Its function is as follows. Positively regulates organization of the outer plexiform layer and Muller glia cells in the retina. May protect actin filaments from depolymerization. May play a role in development of normal skeletal muscle morphology and muscle fiber type composition. This is Xin actin-binding repeat-containing protein 1 from Danio rerio (Zebrafish).